The chain runs to 394 residues: Ceramide synthase 4 (394 aa).

Residues 1 to 31 (MLSSFNEWFWQDRFWLPPNVTWTELEDRDGR) are Lumenal-facing. N-linked (GlcNAc...) asparagine glycosylation is present at Asn-19. Residues 32–52 (VYPHPQDLLAALPLALVLLAM) form a helical membrane-spanning segment. The segment at 67–128 (WLGVRDQTRR…RRRRNQDRPQ (62 aa)) is homeobox-like. One can recognise a TLC domain in the interval 131 to 332 (KKFCEASWRF…ILRMLYSFMK (202 aa)). The next 4 helical transmembrane spans lie at 140–160 (FLFY…ESWL), 179–199 (LYWW…RLPF), 209–229 (QVIH…ANLL), and 260–280 (VCDA…LVLF). The short motif at 291–301 (ESISNRGPFFG) is the Last loop motif element. The helical transmembrane segment at 304 to 324 (FFNGLLMLLQLLHVFWSCLIL) threads the bilayer. Residues 325–394 (RMLYSFMKKG…RLTNRHTTAT (70 aa)) are Cytoplasmic-facing. The interval 341 to 394 (RSDVEESDSSEEAAAAQEPLQLKNGAAGGPRPAPTDGPRSRVAGRLTNRHTTAT) is disordered. 3 positions are modified to phosphoserine: Ser-342, Ser-349, and Ser-350.

In terms of processing, phosphorylated at the C-terminus by CK2. N-glycosylated.

Its subcellular location is the endoplasmic reticulum membrane. The catalysed reaction is sphinganine + octadecanoyl-CoA = N-(octadecanoyl)-sphinganine + CoA + H(+). The enzyme catalyses eicosanoyl-CoA + sphinganine = N-eicosanoylsphinganine + CoA + H(+). It carries out the reaction docosanoyl-CoA + sphinganine = N-docosanoylsphinganine + CoA + H(+). It catalyses the reaction tetracosanoyl-CoA + sphinganine = N-tetracosanoylsphinganine + CoA + H(+). The catalysed reaction is hexacosanoyl-CoA + sphinganine = N-hexacosanoylsphinganine + CoA + H(+). The enzyme catalyses a fatty acyl-CoA + sphing-4-enine = an N-acylsphing-4-enine + CoA + H(+). It carries out the reaction sphing-4-enine + octadecanoyl-CoA = N-octadecanoylsphing-4-enine + CoA + H(+). It catalyses the reaction hexadecasphinganine + octadecanoyl-CoA = N-octadecanoylhexadecasphinganine + CoA + H(+). The protein operates within lipid metabolism; sphingolipid metabolism. In terms of biological role, ceramide synthase that catalyzes formation of ceramide from sphinganine and acyl-CoA substrates, with high selectivity toward long and very-long chains (C18:0-C22:0) as acyl donor. The polypeptide is Ceramide synthase 4 (Homo sapiens (Human)).